A 787-amino-acid chain; its full sequence is Alpha-glucosidase 2 (787 aa).

Active-site residues include D407 and E410. Residue D484 is the Proton donor of the active site.

This sequence belongs to the glycosyl hydrolase 31 family. As to quaternary structure, homohexamer.

The catalysed reaction is Hydrolysis of terminal, non-reducing (1-&gt;4)-linked alpha-D-glucose residues with release of alpha-D-glucose.. In Bacillus thermoamyloliquefaciens, this protein is Alpha-glucosidase 2.